A 308-amino-acid polypeptide reads, in one-letter code: Porphobilinogen deaminase (308 aa).

The residue at position 241 (C241) is an S-(dipyrrolylmethanemethyl)cysteine.

Belongs to the HMBS family. As to quaternary structure, monomer. The cofactor is dipyrromethane.

The catalysed reaction is 4 porphobilinogen + H2O = hydroxymethylbilane + 4 NH4(+). It functions in the pathway porphyrin-containing compound metabolism; protoporphyrin-IX biosynthesis; coproporphyrinogen-III from 5-aminolevulinate: step 2/4. Its function is as follows. Tetrapolymerization of the monopyrrole PBG into the hydroxymethylbilane pre-uroporphyrinogen in several discrete steps. This Staphylococcus aureus (strain bovine RF122 / ET3-1) protein is Porphobilinogen deaminase.